A 358-amino-acid chain; its full sequence is Fructose-bisphosphate aldolase 7, cytosolic (358 aa).

The residue at position 2 (S2) is an N-acetylserine. R52 contributes to the substrate binding site. The residue at position 68 (C68) is an S-glutathionyl cysteine; transient. K142 contacts substrate. Residue C173 is modified to S-glutathionyl cysteine; transient; alternate. Position 173 is an S-nitrosocysteine; transient; alternate (C173). The Proton acceptor role is filled by E183. Residue K225 is the Schiff-base intermediate with dihydroxyacetone-P of the active site. 266 to 268 is a substrate binding site; it reads SGI.

The protein belongs to the class I fructose-bisphosphate aldolase family. In terms of assembly, homotetramer. In terms of processing, S-glutathionylated at Cys-68 and Cys-173. S-nitrosylated at Cys-173. Highly expressed in flowers, and at lower levels in rosettes leaves and cauline leaves.

It localises to the cytoplasm. Its subcellular location is the cytosol. The catalysed reaction is beta-D-fructose 1,6-bisphosphate = D-glyceraldehyde 3-phosphate + dihydroxyacetone phosphate. The protein operates within carbohydrate degradation; glycolysis; D-glyceraldehyde 3-phosphate and glycerone phosphate from D-glucose: step 4/4. Its function is as follows. Plays a key role in glycolysis and gluconeogenesis. The polypeptide is Fructose-bisphosphate aldolase 7, cytosolic (Arabidopsis thaliana (Mouse-ear cress)).